The following is a 563-amino-acid chain: F-box/kelch-repeat protein At5g42350 (563 aa).

Residues 129–175 (YRKHVYLPDDILEMCLMRLPLTSLLNAHLVCKKWQSMANTQRFLQMR) enclose the F-box domain. Kelch repeat units follow at residues 184–231 (WLFL…SIHE), 232–282 (EIYI…ATEV), and 355–402 (VLIA…IICN).

The protein is F-box/kelch-repeat protein At5g42350 of Arabidopsis thaliana (Mouse-ear cress).